The following is a 202-amino-acid chain: Glycerol-3-phosphate acyltransferase (202 aa).

4 helical membrane-spanning segments follow: residues 11–31, 87–107, 116–136, and 158–178; these read ALIA…GLIL, PALA…WLGF, FIGV…AIWL, and VILW…LAAL.

Belongs to the PlsY family. Probably interacts with PlsX.

It is found in the cell inner membrane. It carries out the reaction an acyl phosphate + sn-glycerol 3-phosphate = a 1-acyl-sn-glycero-3-phosphate + phosphate. It participates in lipid metabolism; phospholipid metabolism. Catalyzes the transfer of an acyl group from acyl-phosphate (acyl-PO(4)) to glycerol-3-phosphate (G3P) to form lysophosphatidic acid (LPA). This enzyme utilizes acyl-phosphate as fatty acyl donor, but not acyl-CoA or acyl-ACP. The polypeptide is Glycerol-3-phosphate acyltransferase (Methylorubrum populi (strain ATCC BAA-705 / NCIMB 13946 / BJ001) (Methylobacterium populi)).